We begin with the raw amino-acid sequence, 385 residues long: Tumor protein p53-inducible protein 13 (385 aa).

A signal peptide spans 1–27; sequence MVHPPPPPPRLLLVALVGLLSLREVVA. Residues 28 to 301 are Extracellular-facing; that stretch reads EPAEEAGTPC…ARGPTPRTEE (274 aa). The interval 242-297 is disordered; the sequence is APVSLTTGGPGGNGRSRTEAQMPSGQGNHGGCACPGQVSPAPRAAGPPRVARGPTP. A compositionally biased stretch (low complexity) spans 281 to 297; sequence PAPRAAGPPRVARGPTP. A helical transmembrane segment spans residues 302–322; it reads AAWAAMALTFLLVLLTLATLC. Topologically, residues 323 to 385 are cytoplasmic; sequence TRLHRNFRRS…DSGPDSESSD (63 aa). Positions 359 to 369 are enriched in basic residues; sequence SRRIKRSRRRP. Positions 359 to 385 are disordered; the sequence is SRRIKRSRRRPLLPPTPDSGPDSESSD.

The protein resides in the cell membrane. It is found in the cytoplasm. Functionally, may act as a tumor suppressor. Inhibits tumor cell growth, when overexpressed. This Mus musculus (Mouse) protein is Tumor protein p53-inducible protein 13 (Tp53i13).